A 439-amino-acid chain; its full sequence is 26S rRNA (cytosine-C(5))-methyltransferase nsun-5 (439 aa).

Positions 266, 293, and 313 each coordinate S-adenosyl-L-methionine. The Nucleophile role is filled by Cys366.

It belongs to the class I-like SAM-binding methyltransferase superfamily. RsmB/NOP family.

The enzyme catalyses a cytidine in 26S rRNA + S-adenosyl-L-methionine = a 5-methylcytidine in 26S rRNA + S-adenosyl-L-homocysteine + H(+). S-adenosyl-L-methionine-dependent methyltransferase which methylates the carbon-5 position of cytosine 2381 to 5-methylcytosine (m5C2381) in 26S rRNA. Plays a role in the production of mature 5S, 5.8S, 18S and 26S rRNAs and promotes the processing of the internally transcribed spacer 2 (ITS2), which separates the 5.8S and 26S rRNAs on large pre-rRNA precursors. May play a role in the translation of leucine and proline codons. May play a role in maintaining ribosomal frameshifting in response to osmotic stress. Not required for global translation. This Caenorhabditis elegans protein is 26S rRNA (cytosine-C(5))-methyltransferase nsun-5.